We begin with the raw amino-acid sequence, 673 residues long: Exoribonuclease 2 (673 aa).

The 326-residue stretch at 191–516 (RTDLTATPFF…NHRLLKAVIA (326 aa)) folds into the RNB domain. Residues 562–645 (DKVFNAEIID…ETRSLIAKPA (84 aa)) enclose the S1 motif domain. The disordered stretch occupies residues 650–673 (PGPAPVAPTSEADATPADEAPKAE).

This sequence belongs to the RNR ribonuclease family. RNase II subfamily.

The protein resides in the cytoplasm. The enzyme catalyses Exonucleolytic cleavage in the 3'- to 5'-direction to yield nucleoside 5'-phosphates.. In terms of biological role, involved in mRNA degradation. Hydrolyzes single-stranded polyribonucleotides processively in the 3' to 5' direction. This Aeromonas hydrophila subsp. hydrophila (strain ATCC 7966 / DSM 30187 / BCRC 13018 / CCUG 14551 / JCM 1027 / KCTC 2358 / NCIMB 9240 / NCTC 8049) protein is Exoribonuclease 2.